The sequence spans 78 residues: Large ribosomal subunit protein bL28 (78 aa).

Belongs to the bacterial ribosomal protein bL28 family.

The chain is Large ribosomal subunit protein bL28 from Edwardsiella ictaluri (strain 93-146).